A 229-amino-acid chain; its full sequence is DNA mismatch repair protein MutH (229 aa).

The protein belongs to the MutH family.

It is found in the cytoplasm. Its function is as follows. Sequence-specific endonuclease that cleaves unmethylated GATC sequences. It is involved in DNA mismatch repair. This is DNA mismatch repair protein MutH from Shigella flexneri serotype 5b (strain 8401).